A 361-amino-acid polypeptide reads, in one-letter code: Chorismate synthase (361 aa).

Residues 38–49 (EKDMQHDLDRRR) are compositionally biased toward basic and acidic residues. Residues 38 to 58 (EKDMQHDLDRRRPGTSKYTTQ) form a disordered region. Arginine 48 lines the NADP(+) pocket. Residues 125–127 (RSS), 238–239 (NA), glycine 278, 293–297 (KPTSS), and arginine 319 contribute to the FMN site.

The protein belongs to the chorismate synthase family. As to quaternary structure, homotetramer. FMNH2 is required as a cofactor.

It catalyses the reaction 5-O-(1-carboxyvinyl)-3-phosphoshikimate = chorismate + phosphate. It functions in the pathway metabolic intermediate biosynthesis; chorismate biosynthesis; chorismate from D-erythrose 4-phosphate and phosphoenolpyruvate: step 7/7. Its function is as follows. Catalyzes the anti-1,4-elimination of the C-3 phosphate and the C-6 proR hydrogen from 5-enolpyruvylshikimate-3-phosphate (EPSP) to yield chorismate, which is the branch point compound that serves as the starting substrate for the three terminal pathways of aromatic amino acid biosynthesis. This reaction introduces a second double bond into the aromatic ring system. This chain is Chorismate synthase, found in Photobacterium profundum (strain SS9).